The sequence spans 313 residues: Protein FixB (313 aa).

255–283 is a binding site for FAD; that stretch reads LYLAVGISGQIQHMVGANASQTIFAINKD.

It belongs to the ETF alpha-subunit/FixB family. As to quaternary structure, heterodimer of FixA and FixB.

Its pathway is amine and polyamine metabolism; carnitine metabolism. Functionally, required for anaerobic carnitine reduction. May bring reductant to CaiA. In Escherichia coli O127:H6 (strain E2348/69 / EPEC), this protein is Protein FixB.